Here is a 188-residue protein sequence, read N- to C-terminus: Phosphatidylinositol N-acetylglucosaminyltransferase subunit H (188 aa).

This sequence belongs to the PIGH family. Component of the glycosylphosphatidylinositol-N-acetylglucosaminyltransferase (GPI-GnT) complex composed at least by PIGA, PIGC, PIGH, PIGP, PIGQ, PIGY and DPM2. Interacts with PIGQ.

The protein localises to the cytoplasm. It participates in glycolipid biosynthesis; glycosylphosphatidylinositol-anchor biosynthesis. Part of the glycosylphosphatidylinositol-N-acetylglucosaminyltransferase (GPI-GnT) complex that catalyzes the transfer of N-acetylglucosamine from UDP-N-acetylglucosamine to phosphatidylinositol and participates in the first step of GPI biosynthesis. This Bos taurus (Bovine) protein is Phosphatidylinositol N-acetylglucosaminyltransferase subunit H.